A 255-amino-acid chain; its full sequence is GDIHGQYQDLLRLFEYGGYPPSANFLFLGDYVDRGKQSLETICLLLAYKIRYPSKIYLLRGNHEDAKINRIYGFYDECKRRFNVRLWKIFTDCFNCLPVAALIDDKILCMHGGLSPELDNLNQIREIQRPTEIPDSGLLCDLLWSDPDQKIEGWADSDRGISCTFGADKVAEFLDKNDLDLICRGHQVVEDGYEFFAKRRLVTIFSAPNYGGEFDNAGALLSVDESLVCSFEIMKPALASSSGHPLKKVPKMGKS.

Mn(2+) contacts are provided by Asp-2, His-4, Asp-30, and Asn-62. The Proton donor role is filled by His-63. Mn(2+)-binding residues include His-111 and His-186.

The protein belongs to the PPP phosphatase family. PP-1 subfamily. Mn(2+) is required as a cofactor.

It carries out the reaction O-phospho-L-seryl-[protein] + H2O = L-seryl-[protein] + phosphate. The enzyme catalyses O-phospho-L-threonyl-[protein] + H2O = L-threonyl-[protein] + phosphate. This chain is Serine/threonine-protein phosphatase PP1, found in Brassica napus (Rape).